Consider the following 87-residue polypeptide: Lipid-anchored plasma membrane protein uvi15 (87 aa).

Residues 1 to 64 (MSAQQFYGDK…MYVQQPQASD (64 aa)) form a disordered region. Residues 18–41 (QQAYGGPNYYPPQQNYPQQGYAPP) show a composition bias toward low complexity.

The protein belongs to the CYSTM1 family. In terms of processing, palmitoylated.

It localises to the cell membrane. Its subcellular location is the cell tip. In terms of biological role, required for the maintenance of viability of cells in stationary phase and in starvation conditions. The sequence is that of Lipid-anchored plasma membrane protein uvi15 (uvi15) from Schizosaccharomyces pombe (strain 972 / ATCC 24843) (Fission yeast).